A 133-amino-acid chain; its full sequence is Mitochondrial import inner membrane translocase subunit TIM17-3 (133 aa).

4 consecutive transmembrane segments (helical) span residues 15 to 35 (IVNA…VYHF), 63 to 83 (GGTF…LVRI), 90 to 105 (WNSI…VLSI), and 115 to 128 (SAVM…VLNP).

The protein belongs to the Tim17/Tim22/Tim23 family. Component of the TIM17:23 complex at least composed of TIM23, TIM17 and TIM50. The complex interacts with the TIM44 component of the PAM complex. Expressed in cotyledons, roots, flowers and leaves.

The protein localises to the mitochondrion inner membrane. In terms of biological role, essential component of the TIM17:23 complex, a complex that mediates the translocation of transit peptide-containing proteins across the mitochondrial inner membrane. Links the inner and outer membranes. The sequence is that of Mitochondrial import inner membrane translocase subunit TIM17-3 (TIM17-3) from Arabidopsis thaliana (Mouse-ear cress).